The primary structure comprises 658 residues: Protein kinase and PP2C-like domain-containing protein (658 aa).

The Protein kinase domain occupies 30–314; it reads FTLLSPIAKG…DNVVLELESI (285 aa). Residues 36 to 44 and K57 each bind ATP; that span reads IAKGSESVV. Catalysis depends on D149, which acts as the Proton acceptor. The 257-residue stretch at 392 to 648 folds into the PPM-type phosphatase domain; that stretch reads SCGSFATCGR…DNITVIVVFL (257 aa). Residues D428, G429, D599, and D639 each contribute to the Mn(2+) site.

It in the N-terminal section; belongs to the protein kinase superfamily. Ser/Thr protein kinase family. The protein in the C-terminal section; belongs to the PP2C family. Mg(2+) serves as cofactor. The cofactor is Mn(2+).

It carries out the reaction L-seryl-[protein] + ATP = O-phospho-L-seryl-[protein] + ADP + H(+). It catalyses the reaction L-threonyl-[protein] + ATP = O-phospho-L-threonyl-[protein] + ADP + H(+). The catalysed reaction is O-phospho-L-seryl-[protein] + H2O = L-seryl-[protein] + phosphate. The enzyme catalyses O-phospho-L-threonyl-[protein] + H2O = L-threonyl-[protein] + phosphate. The sequence is that of Protein kinase and PP2C-like domain-containing protein from Arabidopsis thaliana (Mouse-ear cress).